The primary structure comprises 244 residues: Ribonuclease 3 (244 aa).

An RNase III domain is found at 17–146 (FEKKMQELNL…FVGALYLDQG (130 aa)). A Mg(2+)-binding site is contributed by glutamate 59. Residue aspartate 63 is part of the active site. The Mg(2+) site is built by aspartate 132 and glutamate 135. Residue glutamate 135 is part of the active site. A DRBM domain is found at 172–241 (DFKTQFQEYV…AERAYKILKN (70 aa)).

Belongs to the ribonuclease III family. As to quaternary structure, homodimer. The cofactor is Mg(2+).

It is found in the cytoplasm. It carries out the reaction Endonucleolytic cleavage to 5'-phosphomonoester.. In terms of biological role, digests double-stranded RNA. Involved in the processing of primary rRNA transcript to yield the immediate precursors to the large and small rRNAs (23S and 16S). Processes some mRNAs, and tRNAs when they are encoded in the rRNA operon. Processes pre-crRNA and tracrRNA of type II CRISPR loci if present in the organism. This is Ribonuclease 3 from Staphylococcus saprophyticus subsp. saprophyticus (strain ATCC 15305 / DSM 20229 / NCIMB 8711 / NCTC 7292 / S-41).